The sequence spans 464 residues: Glutamate--tRNA ligase 1 (464 aa).

The short motif at 8 to 18 (PSPTGHLHVGG) is the 'HIGH' region element. The short motif at 231–235 (PLSKR) is the 'KMSKS' region element. Lys234 provides a ligand contact to ATP.

This sequence belongs to the class-I aminoacyl-tRNA synthetase family. Glutamate--tRNA ligase type 1 subfamily. Monomer.

Its subcellular location is the cytoplasm. It catalyses the reaction tRNA(Glu) + L-glutamate + ATP = L-glutamyl-tRNA(Glu) + AMP + diphosphate. Its function is as follows. Catalyzes the attachment of glutamate to tRNA(Glu) in a two-step reaction: glutamate is first activated by ATP to form Glu-AMP and then transferred to the acceptor end of tRNA(Glu). The sequence is that of Glutamate--tRNA ligase 1 from Thermotoga petrophila (strain ATCC BAA-488 / DSM 13995 / JCM 10881 / RKU-1).